Consider the following 191-residue polypeptide: Large ribosomal subunit protein uL5 (191 aa).

The protein belongs to the universal ribosomal protein uL5 family. In terms of assembly, part of the 50S ribosomal subunit; part of the 5S rRNA/L5/L18/L25 subcomplex. Contacts the 5S rRNA and the P site tRNA. Forms a bridge to the 30S subunit in the 70S ribosome.

Its function is as follows. This is one of the proteins that bind and probably mediate the attachment of the 5S RNA into the large ribosomal subunit, where it forms part of the central protuberance. In the 70S ribosome it contacts protein S13 of the 30S subunit (bridge B1b), connecting the 2 subunits; this bridge is implicated in subunit movement. Contacts the P site tRNA; the 5S rRNA and some of its associated proteins might help stabilize positioning of ribosome-bound tRNAs. This chain is Large ribosomal subunit protein uL5, found in Micrococcus luteus (strain ATCC 4698 / DSM 20030 / JCM 1464 / CCM 169 / CCUG 5858 / IAM 1056 / NBRC 3333 / NCIMB 9278 / NCTC 2665 / VKM Ac-2230) (Micrococcus lysodeikticus).